The chain runs to 309 residues: Bifunctional methylenetetrahydrofolate dehydrogenase/cyclohydrolase, mitochondrial (309 aa).

It belongs to the tetrahydrofolate dehydrogenase/cyclohydrolase family. Homodimer. Mg(2+) serves as cofactor.

It is found in the mitochondrion. The catalysed reaction is (6R)-5,10-methylene-5,6,7,8-tetrahydrofolate + NAD(+) = (6R)-5,10-methenyltetrahydrofolate + NADH. The enzyme catalyses (6R)-5,10-methenyltetrahydrofolate + H2O = (6R)-10-formyltetrahydrofolate + H(+). Functionally, may play a role in spermatogenesis. The sequence is that of Bifunctional methylenetetrahydrofolate dehydrogenase/cyclohydrolase, mitochondrial (Nmdmc) from Drosophila melanogaster (Fruit fly).